The primary structure comprises 359 residues: E3 ubiquitin-protein ligase RNF146 (359 aa).

An RING-type zinc finger spans residues 36 to 74 (CAICLQTCVHPVSLPCKHVFCYLCVKGASWLGKRCALCR). Glycyl lysine isopeptide (Lys-Gly) (interchain with G-Cter in ubiquitin) cross-links involve residues lysine 84 and lysine 94. Positions 91 to 167 (EELKAASRGN…EHGRRRKIKR (77 aa)) constitute a WWE domain. Residues tyrosine 107, arginine 110, and tryptophan 114 each contribute to the a glycoprotein site. A Glycyl lysine isopeptide (Lys-Gly) (interchain with G-Cter in ubiquitin) cross-link involves residue lysine 130. Tyrosine 144, glutamine 153, arginine 163, and lysine 175 together coordinate a glycoprotein. A Glycyl lysine isopeptide (Lys-Gly) (interchain with G-Cter in ubiquitin) cross-link involves residue lysine 175. The segment at 259–359 (ERSHRGEGEE…PDGQCTVTEV (101 aa)) is disordered. Acidic residues predominate over residues 284-298 (SVEETESDASSDSED). A phosphoserine mark is found at serine 290 and serine 294. Polar residues predominate over residues 306–322 (HSLTQQRLLVPNANQTV).

In terms of assembly, can form homooligomers. Interacts with PARsylated AXIN1, AXIN2, BLZF1, CASC3, H1-2, IPO7, LIG3, NCL, PARP1, XRCC1, XRCC5 and XRCC6. Interacts with DDB1, DHX15, IQGAP1, LRPPRC, PARP2, PRKDC, RUVBL2, TNKS1 and TNKS2. Binding often leads to interactor ubiquitination, in the presence of the appropriate E1 and E2 enzymes, and proteasomal degradation. Ubiquitinated; autoubiquitinated. Autoubiquitination is enhanced upon poly(ADP-ribose)-binding.

It is found in the cytoplasm. The protein resides in the cytosol. It localises to the nucleus. The enzyme catalyses S-ubiquitinyl-[E2 ubiquitin-conjugating enzyme]-L-cysteine + [acceptor protein]-L-lysine = [E2 ubiquitin-conjugating enzyme]-L-cysteine + N(6)-ubiquitinyl-[acceptor protein]-L-lysine.. It functions in the pathway protein modification; protein ubiquitination. In terms of biological role, E3 ubiquitin-protein ligase that specifically binds poly-ADP-ribosylated (PARsylated) proteins and mediates their ubiquitination and subsequent degradation. May regulate many important biological processes, such as cell survival and DNA damage response. Acts as an activator of the Wnt signaling pathway by mediating the ubiquitination of PARsylated AXIN1 and AXIN2, 2 key components of the beta-catenin destruction complex. Acts in cooperation with tankyrase proteins (TNKS and TNKS2), which mediate PARsylation of target proteins AXIN1, AXIN2, BLZF1, CASC3, TNKS and TNKS2. Recognizes and binds tankyrase-dependent PARsylated proteins via its WWE domain and mediates their ubiquitination, leading to their degradation. Different ubiquitin linkage types have been observed: TNKS2 undergoes ubiquitination at 'Lys-48' and 'Lys-63', while AXIN1 is only ubiquitinated at 'Lys-48'. May regulate TNKS and TNKS2 subcellular location, preventing aggregation at a centrosomal location. Neuroprotective protein. Protects the brain against N-methyl-D-aspartate (NMDA) receptor-mediated glutamate excitotoxicity and ischemia, by interfering with PAR-induced cell death, called parthanatos. Prevents nuclear translocation of AIFM1 in a PAR-binding dependent manner. Does not affect PARP1 activation. Protects against cell death induced by DNA damaging agents, such as N-methyl-N-nitro-N-nitrosoguanidine (MNNG) and rescues cells from G1 arrest. Promotes cell survival after gamma-irradiation. Facilitates DNA repair. This is E3 ubiquitin-protein ligase RNF146 (RNF146) from Ailuropoda melanoleuca (Giant panda).